A 394-amino-acid polypeptide reads, in one-letter code: NAD(P)H-quinone oxidoreductase subunit H (394 aa).

It belongs to the complex I 49 kDa subunit family. NDH-1 can be composed of about 15 different subunits; different subcomplexes with different compositions have been identified which probably have different functions.

It is found in the cellular thylakoid membrane. The enzyme catalyses a plastoquinone + NADH + (n+1) H(+)(in) = a plastoquinol + NAD(+) + n H(+)(out). It catalyses the reaction a plastoquinone + NADPH + (n+1) H(+)(in) = a plastoquinol + NADP(+) + n H(+)(out). In terms of biological role, NDH-1 shuttles electrons from an unknown electron donor, via FMN and iron-sulfur (Fe-S) centers, to quinones in the respiratory and/or the photosynthetic chain. The immediate electron acceptor for the enzyme in this species is believed to be plastoquinone. Couples the redox reaction to proton translocation, and thus conserves the redox energy in a proton gradient. Cyanobacterial NDH-1 also plays a role in inorganic carbon-concentration. This is NAD(P)H-quinone oxidoreductase subunit H from Parasynechococcus marenigrum (strain WH8102).